The following is a 620-amino-acid chain: Glutathione-regulated potassium-efflux system protein KefC (620 aa).

12 consecutive transmembrane segments (helical) span residues 4–24 (HTLL…PIAV), 26–46 (LGLG…PWGL), 54–74 (SILH…GLEL), 90–110 (GALQ…FLGL), 114–134 (VAEL…MQAM), 149–169 (FAVL…IPLL), 178–198 (LGAF…VVLL), 218–238 (VFSA…EEVG), 270–290 (GLLL…GTLV), 294–314 (LRIL…LWLV), 327–347 (WFAV…GAAQ), and 359–379 (ALTL…VLLT). One can recognise an RCK N-terminal domain in the interval 399–518 (QPRVIVAGFG…AGVAMPERET (120 aa)). A disordered region spans residues 599–620 (QGTAEGKHSGEAADEPEVKPSI).

It belongs to the monovalent cation:proton antiporter 2 (CPA2) transporter (TC 2.A.37) family. KefC subfamily. In terms of assembly, homodimer. Interacts with the regulatory subunit KefF.

The protein resides in the cell inner membrane. Functionally, pore-forming subunit of a potassium efflux system that confers protection against electrophiles. Catalyzes K(+)/H(+) antiport. The chain is Glutathione-regulated potassium-efflux system protein KefC from Salmonella choleraesuis (strain SC-B67).